A 1100-amino-acid polypeptide reads, in one-letter code: Exportin-T (1100 aa).

Belongs to the exportin family. In terms of assembly, interacts with CEX1, GSP1, GSP2, NSP1, NUP2 and UTP8.

The protein localises to the nucleus. The protein resides in the cytoplasm. In terms of biological role, tRNA nucleus export receptor which facilitates tRNA translocation across the nuclear pore complex. Preferentially interacts with tRNAs with mature 5'- and 3'-termini and does not distinguish between intron-containing and spliced tRNAs. In the nucleus binds to tRNA and to the Ran-GTPases GSP1 or GSP2 in their active GTP-bound form. Docking of this trimeric complex to the nuclear pore complex (NPC) is mediated through binding to nucleoporins. Upon transit of a nuclear export complex into the cytoplasm, disassembling of the complex and hydrolysis of Ran-GTP to Ran-GDP cause release of the tRNA from the export receptor. The directionality of nuclear export is thought to be conferred by an asymmetric distribution of the GTP- and GDP-bound forms of Ran between the cytoplasm and nucleus. This chain is Exportin-T (LOS1), found in Saccharomyces cerevisiae (strain ATCC 204508 / S288c) (Baker's yeast).